We begin with the raw amino-acid sequence, 96 residues long: Co-chaperonin GroES (96 aa).

It belongs to the GroES chaperonin family. In terms of assembly, heptamer of 7 subunits arranged in a ring. Interacts with the chaperonin GroEL.

The protein resides in the cytoplasm. Its function is as follows. Together with the chaperonin GroEL, plays an essential role in assisting protein folding. The GroEL-GroES system forms a nano-cage that allows encapsulation of the non-native substrate proteins and provides a physical environment optimized to promote and accelerate protein folding. GroES binds to the apical surface of the GroEL ring, thereby capping the opening of the GroEL channel. The sequence is that of Co-chaperonin GroES from Tremblaya princeps.